A 229-amino-acid chain; its full sequence is Large ribosomal subunit protein uL1 (229 aa).

This sequence belongs to the universal ribosomal protein uL1 family. In terms of assembly, part of the 50S ribosomal subunit.

In terms of biological role, binds directly to 23S rRNA. The L1 stalk is quite mobile in the ribosome, and is involved in E site tRNA release. Protein L1 is also a translational repressor protein, it controls the translation of the L11 operon by binding to its mRNA. In Haemophilus ducreyi (strain 35000HP / ATCC 700724), this protein is Large ribosomal subunit protein uL1.